Consider the following 264-residue polypeptide: Glutamate racemase (264 aa).

Residues 11-12 and 43-44 contribute to the substrate site; these read DS and YG. The Proton donor/acceptor role is filled by Cys74. Position 75-76 (75-76) interacts with substrate; the sequence is NT. The active-site Proton donor/acceptor is Cys193. 194 to 195 contributes to the substrate binding site; that stretch reads TH.

It belongs to the aspartate/glutamate racemases family.

The catalysed reaction is L-glutamate = D-glutamate. It functions in the pathway cell wall biogenesis; peptidoglycan biosynthesis. Provides the (R)-glutamate required for cell wall biosynthesis. The chain is Glutamate racemase from Bifidobacterium longum (strain DJO10A).